We begin with the raw amino-acid sequence, 396 residues long: Ribosomal RNA large subunit methyltransferase I (396 aa).

One can recognise a PUA domain in the interval 2-81 (SVRLVLAKGR…ESIDIAFFSR (80 aa)).

This sequence belongs to the methyltransferase superfamily. RlmI family.

The protein localises to the cytoplasm. It carries out the reaction cytidine(1962) in 23S rRNA + S-adenosyl-L-methionine = 5-methylcytidine(1962) in 23S rRNA + S-adenosyl-L-homocysteine + H(+). Its function is as follows. Specifically methylates the cytosine at position 1962 (m5C1962) of 23S rRNA. This chain is Ribosomal RNA large subunit methyltransferase I, found in Escherichia coli O157:H7.